Here is a 487-residue protein sequence, read N- to C-terminus: N-succinylglutamate 5-semialdehyde dehydrogenase (487 aa).

An NAD(+)-binding site is contributed by 221 to 226 (GSSDTG). Catalysis depends on residues glutamate 244 and cysteine 278.

It belongs to the aldehyde dehydrogenase family. AstD subfamily.

The enzyme catalyses N-succinyl-L-glutamate 5-semialdehyde + NAD(+) + H2O = N-succinyl-L-glutamate + NADH + 2 H(+). The protein operates within amino-acid degradation; L-arginine degradation via AST pathway; L-glutamate and succinate from L-arginine: step 4/5. Catalyzes the NAD-dependent reduction of succinylglutamate semialdehyde into succinylglutamate. This Burkholderia cenocepacia (strain HI2424) protein is N-succinylglutamate 5-semialdehyde dehydrogenase.